We begin with the raw amino-acid sequence, 161 residues long: Arginine repressor (161 aa).

The protein belongs to the ArgR family.

The protein localises to the cytoplasm. It participates in amino-acid biosynthesis; L-arginine biosynthesis [regulation]. Its function is as follows. Regulates arginine biosynthesis genes. This chain is Arginine repressor, found in Corynebacterium aurimucosum (strain ATCC 700975 / DSM 44827 / CIP 107346 / CN-1) (Corynebacterium nigricans).